Consider the following 432-residue polypeptide: Glutamate-1-semialdehyde 2,1-aminomutase (432 aa).

The residue at position 269 (lysine 269) is an N6-(pyridoxal phosphate)lysine.

Belongs to the class-III pyridoxal-phosphate-dependent aminotransferase family. HemL subfamily. As to quaternary structure, homodimer. Pyridoxal 5'-phosphate serves as cofactor.

Its subcellular location is the cytoplasm. It catalyses the reaction (S)-4-amino-5-oxopentanoate = 5-aminolevulinate. It participates in porphyrin-containing compound metabolism; protoporphyrin-IX biosynthesis; 5-aminolevulinate from L-glutamyl-tRNA(Glu): step 2/2. In Desulforamulus reducens (strain ATCC BAA-1160 / DSM 100696 / MI-1) (Desulfotomaculum reducens), this protein is Glutamate-1-semialdehyde 2,1-aminomutase.